Consider the following 86-residue polypeptide: Muscarinic toxin-like protein (86 aa).

An N-terminal signal peptide occupies residues 1 to 21; it reads MKTLLLTLAVVTMVCMDLGYT. 4 cysteine pairs are disulfide-bonded: C24/C45, C38/C62, C66/C78, and C79/C84.

It belongs to the three-finger toxin family. Short-chain subfamily. Orphan group VIII (haditoxin) sub-subfamily. Homodimer; non-covalently linked. As to expression, expressed by the venom gland.

Its subcellular location is the secreted. Antagonist of muscle and neuronal nicotinic acetylcholine receptors (nAChR) with highest affinity for neuronal alpha-7/CHRNA7 nAChRs. This Bungarus multicinctus (Many-banded krait) protein is Muscarinic toxin-like protein.